Here is a 459-residue protein sequence, read N- to C-terminus: Smoothelin-like protein 1 (459 aa).

The span at 1-27 (MEQTEGNSSEDGTTVSPTAGNLETPGS) shows a compositional bias: polar residues. Positions 1-314 (MEQTEGNSSE…RPRGPRAQNR (314 aa)) are disordered. 5 stretches are compositionally biased toward basic and acidic residues: residues 42 to 55 (SDKEGPSDWAEHLC), 75 to 105 (DELKTDLQGEARGKDEAQGDLAEEKVGKEDT), 112 to 168 (DTGK…KEDA), 185 to 211 (ADVKDQAKPELPEVDGKETGSDTKELV), and 221 to 232 (EQGKENESEERA). A coiled-coil region spans residues 124-154 (NEVREKEEAMLASEKQKVDEKETNLESKEKS). Low complexity predominate over residues 260–283 (PESTGETSPSASESSPSEVPGSPT). Positions 287–300 (PSEKKKDRAPERRV) are enriched in basic and acidic residues. Residue serine 301 is modified to Phosphoserine; by PKA and PKG. The region spanning 343–449 (GGVKNMLLEW…YIQELYRSLV (107 aa)) is the Calponin-homology (CH) domain. Positions 441–459 (IQELYRSLVQKGLVKTKKK) are calmodulin-binding.

Belongs to the smoothelin family. In terms of assembly, interacts with PPP1R12A. Maximal phosphorylation of Ser-301 correlates with maximal relaxation of aorta in response to acetylcholine. As to expression, widely expressed, with highest expression in skeletal muscles (at protein level). Within striated muscles, significantly more expressed in soleus muscle compared with plantaris muscle or white vastus (at protein level). 30-40% lower expression in females than in males (at protein level). Expressed in type 2a fibers, but not detected in fast twitch type 2b muscle white vastus nor in oxidative type I/b heart muscle (at protein level). Expressed within myometrial cells of the uterus, as well as in the endometrial layer. In the aorta, confined to smooth muscle cells. Not detected in endothelial cells.

The protein localises to the cytoplasm. The protein resides in the myofibril. It localises to the sarcomere. It is found in the i band. Its subcellular location is the m line. The protein localises to the nucleus. In terms of biological role, plays a role in the regulation of contractile properties of both striated and smooth muscles. When unphosphorylated, may inhibit myosin dephosphorylation. Phosphorylation at Ser-301 reduces this inhibitory activity. The chain is Smoothelin-like protein 1 (Smtnl1) from Mus musculus (Mouse).